The primary structure comprises 343 residues: Anthranilate phosphoribosyltransferase (343 aa).

5-phospho-alpha-D-ribose 1-diphosphate-binding positions include Gly77, 80–81, Thr85, 87–90, 105–113, and Ser117; these read GD, NVST, and KHGNRSSSG. Gly77 serves as a coordination point for anthranilate. Residue Ser89 participates in Mg(2+) binding. Residue Asn108 coordinates anthranilate. Arg163 lines the anthranilate pocket. Residues Asp222 and Glu223 each contribute to the Mg(2+) site.

This sequence belongs to the anthranilate phosphoribosyltransferase family. In terms of assembly, homodimer. It depends on Mg(2+) as a cofactor.

It carries out the reaction N-(5-phospho-beta-D-ribosyl)anthranilate + diphosphate = 5-phospho-alpha-D-ribose 1-diphosphate + anthranilate. The protein operates within amino-acid biosynthesis; L-tryptophan biosynthesis; L-tryptophan from chorismate: step 2/5. Functionally, catalyzes the transfer of the phosphoribosyl group of 5-phosphorylribose-1-pyrophosphate (PRPP) to anthranilate to yield N-(5'-phosphoribosyl)-anthranilate (PRA). This chain is Anthranilate phosphoribosyltransferase, found in Cenarchaeum symbiosum (strain A).